The sequence spans 525 residues: GMP synthase [glutamine-hydrolyzing] (525 aa).

Residues 9–207 enclose the Glutamine amidotransferase type-1 domain; it reads RILILDFGSQ…VQDICGCEAL (199 aa). Cysteine 86 (nucleophile) is an active-site residue. Residues histidine 181 and glutamate 183 contribute to the active site. Residues 208-400 enclose the GMPS ATP-PPase domain; that stretch reads WTPSNIVEDA…LGLPYDMVYR (193 aa). An ATP-binding site is contributed by 235–241; the sequence is SGGVDSS.

In terms of assembly, homodimer.

It carries out the reaction XMP + L-glutamine + ATP + H2O = GMP + L-glutamate + AMP + diphosphate + 2 H(+). It participates in purine metabolism; GMP biosynthesis; GMP from XMP (L-Gln route): step 1/1. Functionally, catalyzes the synthesis of GMP from XMP. This chain is GMP synthase [glutamine-hydrolyzing], found in Pseudomonas putida (strain W619).